A 303-amino-acid polypeptide reads, in one-letter code: Quinolinate synthase (303 aa).

Iminosuccinate contacts are provided by His-24 and Ser-41. Cys-86 lines the [4Fe-4S] cluster pocket. Iminosuccinate contacts are provided by residues 112–114 (YIN) and Ser-129. Cys-172 is a binding site for [4Fe-4S] cluster. Residues 198 to 200 (HPE) and Thr-215 contribute to the iminosuccinate site. Cys-260 contributes to the [4Fe-4S] cluster binding site.

It belongs to the quinolinate synthase family. Type 2 subfamily. [4Fe-4S] cluster serves as cofactor.

Its subcellular location is the cytoplasm. The catalysed reaction is iminosuccinate + dihydroxyacetone phosphate = quinolinate + phosphate + 2 H2O + H(+). It functions in the pathway cofactor biosynthesis; NAD(+) biosynthesis; quinolinate from iminoaspartate: step 1/1. Functionally, catalyzes the condensation of iminoaspartate with dihydroxyacetone phosphate to form quinolinate. The sequence is that of Quinolinate synthase from Caldicellulosiruptor bescii (strain ATCC BAA-1888 / DSM 6725 / KCTC 15123 / Z-1320) (Anaerocellum thermophilum).